We begin with the raw amino-acid sequence, 113 residues long: N-alpha-acetyltransferase 38, NatC auxiliary subunit (113 aa).

The segment at 1–29 (MAAVLEENGCSRQSSPGAGDSDAEAGDTA) is disordered. In terms of domain architecture, Sm spans 28–106 (TARHKLESLL…IVSIQVELES (79 aa)).

The protein belongs to the snRNP Sm proteins family. In terms of assembly, component of the N-terminal acetyltransferase C (NatC) complex.

The protein resides in the cytoplasm. It is found in the nucleus. In terms of biological role, auxillary component of the N-terminal acetyltransferase C (NatC) complex which catalyzes acetylation of N-terminal methionine residues. N-terminal acetylation protects proteins from ubiquitination and degradation by the N-end rule pathway. This chain is N-alpha-acetyltransferase 38, NatC auxiliary subunit (naa38), found in Xenopus tropicalis (Western clawed frog).